A 201-amino-acid chain; its full sequence is 3-isopropylmalate dehydratase small subunit (201 aa).

It belongs to the LeuD family. LeuD type 1 subfamily. In terms of assembly, heterodimer of LeuC and LeuD.

It catalyses the reaction (2R,3S)-3-isopropylmalate = (2S)-2-isopropylmalate. Its pathway is amino-acid biosynthesis; L-leucine biosynthesis; L-leucine from 3-methyl-2-oxobutanoate: step 2/4. Functionally, catalyzes the isomerization between 2-isopropylmalate and 3-isopropylmalate, via the formation of 2-isopropylmaleate. The polypeptide is 3-isopropylmalate dehydratase small subunit (Shewanella piezotolerans (strain WP3 / JCM 13877)).